The sequence spans 81 residues: Cytotoxin 1 (81 aa).

Residues Met1 to Thr21 form the signal peptide. 4 disulfides stabilise this stretch: Cys24/Cys42, Cys35/Cys59, Cys63/Cys74, and Cys75/Cys80.

This sequence belongs to the three-finger toxin family. Short-chain subfamily. Type IA cytotoxin sub-subfamily. In terms of assembly, monomer in solution; homodimer and oligomer in the presence of negatively charged lipids forming a pore with a size ranging between 20 and 30 Angstroms. In terms of tissue distribution, expressed by the venom gland.

The protein resides in the secreted. Its subcellular location is the target cell membrane. Functionally, shows cytolytic activity on many different cells by forming pores in lipid membranes. Exhibits concentration-dependent growth inhibitory effects in the lung cell lines A549 (IC(50)= 0.88) and NL20 (IC(50)= 1.91), in the prostate cell lines PC-3 (IC(50)= 3.13 ug/ml) and RWPE-1 (IC(50)=0.35 ug/ml), and in the breast cell lines MCF-7 (IC(50)= 9.10 ug/ml) and 184B5 (IC(50)=6.21 ug/ml), with high selectivity for the lung cancer cell line A549 (selectivity index=2.17). Induces primarily necrosis in the A549 lung cancer cell line, and mainly caspase-independent late apoptosis in the breast cancer cells line MCF-7 and in the prostate cancer cell line PC-3. This Naja sumatrana (Equatorial spitting cobra) protein is Cytotoxin 1.